The sequence spans 741 residues: D-(-)-3-hydroxybutyrate oligomer hydrolase (741 aa).

Residues 1–23 (MKTIQGKSPGRWYSRGMLLAAMA) form the signal peptide. Positions 45–68 (NGNAGGNGNNNGNNNGNTVSNTKP) are disordered. Ser-338 (charge relay system) is an active-site residue.

It belongs to the D-(-)-3-hydroxybutyrate oligomer hydrolase family.

Its subcellular location is the secreted. It carries out the reaction (3R)-hydroxybutanoate dimer + H2O = 2 (R)-3-hydroxybutanoate + H(+). It participates in lipid metabolism; butanoate metabolism. Its function is as follows. Participates in the degradation of poly-3-hydroxybutyrate (PHB). It works downstream of poly(3-hydroxybutyrate) depolymerase, hydrolyzing D(-)-3-hydroxybutyrate oligomers of various length (3HB-oligomers) into 3HB-monomers. This is D-(-)-3-hydroxybutyrate oligomer hydrolase from Ralstonia pickettii (Burkholderia pickettii).